A 24-amino-acid chain; its full sequence is Homotarsinin (24 aa).

Arginine 24 is modified (arginine amide).

In terms of assembly, homodimer; disulfide-linked. As to expression, expressed by the skin glands.

It localises to the secreted. Functionally, antimicrobial peptide. Active against Gram-negative bacteria E.coli ATCC 25922 (MIC=1.5 uM) and P.aeruginosa ATTC 27853 (MIC=23.2 uM) and against Gram-positive bacterium S.aureus ATCC 29313 (MIC=11.6 uM). Has no hemolytic activity. Associates with and disrupts membranes in vitro. In Phyllomedusa tarsius (Brownbelly leaf frog), this protein is Homotarsinin.